We begin with the raw amino-acid sequence, 357 residues long: Probable cinnamyl alcohol dehydrogenase (357 aa).

Cys-47 lines the Zn(2+) pocket. Residue Thr-49 participates in NADP(+) binding. The Zn(2+) site is built by His-69, Glu-70, Cys-100, Cys-103, Cys-106, Cys-114, and Cys-163. NADP(+) contacts are provided by residues Thr-167, 188 to 193 (GLGGVG), 211 to 216 (SSSDKK), Thr-251, Gly-275, and 298 to 300 (SFI).

Belongs to the zinc-containing alcohol dehydrogenase family. In terms of assembly, homodimer. It depends on Zn(2+) as a cofactor.

The catalysed reaction is (E)-cinnamyl alcohol + NADP(+) = (E)-cinnamaldehyde + NADPH + H(+). It catalyses the reaction (E)-coniferol + NADP(+) = (E)-coniferaldehyde + NADPH + H(+). The enzyme catalyses (E)-sinapyl alcohol + NADP(+) = (E)-sinapaldehyde + NADPH + H(+). It carries out the reaction (E)-4-coumaroyl alcohol + NADP(+) = (E)-4-coumaraldehyde + NADPH + H(+). The catalysed reaction is (E)-caffeyl alcohol + NADP(+) = (E)-caffeyl aldehyde + NADPH + H(+). Its pathway is aromatic compound metabolism; phenylpropanoid biosynthesis. Functionally, involved in lignin biosynthesis. Catalyzes the final step specific for the production of lignin monomers. Catalyzes the NADPH-dependent reduction of coniferaldehyde, 5-hydroxyconiferaldehyde, sinapaldehyde, 4-coumaraldehyde and caffeyl aldehyde to their respective alcohols. The protein is Probable cinnamyl alcohol dehydrogenase of Populus deltoides (Eastern poplar).